The sequence spans 142 residues: Transcription antitermination protein NusB (142 aa).

It belongs to the NusB family.

Involved in transcription antitermination. Required for transcription of ribosomal RNA (rRNA) genes. Binds specifically to the boxA antiterminator sequence of the ribosomal RNA (rrn) operons. This Thermotoga sp. (strain RQ2) protein is Transcription antitermination protein NusB.